The chain runs to 134 residues: Syncollin (134 aa).

The N-terminal stretch at 1–21 (MSPLRPLLLALALASVPCAQG) is a signal peptide.

As to quaternary structure, monomer and homooligomer; most probably hexameric. Interacts with GP2. Post-translationally, contains intrachain disulfide bonds.

The protein resides in the zymogen granule membrane. It localises to the zymogen granule lumen. In terms of biological role, functions in exocytosis in pancreatic acinar cells regulating the fusion of zymogen granules with each other. May have a pore-forming activity on membranes and regulate exocytosis in other exocrine tissues. The chain is Syncollin (SYCN) from Homo sapiens (Human).